The sequence spans 240 residues: RING finger protein 151 (240 aa).

The RING-type zinc-finger motif lies at 20–58 (CSVCHGVLKRPVRLPCSHIFCKKCILRWLARQKTCPCCR). The segment at 101 to 156 (GHQDSCPFELMVCPNEGCMLRVPRGALDEHRQNCQHGAYHRCSLGCGATLGPVERA) adopts a TRAF-type zinc-finger fold.

This is RING finger protein 151 (RNF151) from Bos taurus (Bovine).